A 205-amino-acid chain; its full sequence is Urease accessory protein UreE (205 aa).

Positions 170-192 (EHHGHSHSHSHDHDHDHDHDHQH) are enriched in basic and acidic residues. A disordered region spans residues 170–205 (EHHGHSHSHSHDHDHDHDHDHQHGPCCSHGHHHGHR).

This sequence belongs to the UreE family.

The protein resides in the cytoplasm. Functionally, involved in urease metallocenter assembly. Binds nickel. Probably functions as a nickel donor during metallocenter assembly. In Burkholderia pseudomallei (strain 668), this protein is Urease accessory protein UreE.